Consider the following 388-residue polypeptide: Pepsin F (388 aa).

A signal peptide spans 1-15 (MKWLGLLGLVALSEC). Residues 16–58 (LVTIPLMKVKSMRENLRENDILLDYLEKHPYRPTYKLLSGQQD) constitute a propeptide, activation peptide. The Peptidase A1 domain maps to 74–385 (YIGIISIGTP…DRANNRIGLA (312 aa)). Aspartate 92 is a catalytic residue. 2 cysteine pairs are disulfide-bonded: cysteine 105–cysteine 110 and cysteine 266–cysteine 270. Aspartate 275 is an active-site residue. Cysteine 309 and cysteine 343 form a disulfide bridge.

This sequence belongs to the peptidase A1 family.

Its subcellular location is the secreted. The catalysed reaction is Preferential cleavage: hydrophobic, preferably aromatic, residues in P1 and P1' positions. Cleaves 1-Phe-|-Val-2, 4-Gln-|-His-5, 13-Glu-|-Ala-14, 14-Ala-|-Leu-15, 15-Leu-|-Tyr-16, 16-Tyr-|-Leu-17, 23-Gly-|-Phe-24, 24-Phe-|-Phe-25 and 25-Phe-|-Tyr-26 bonds in the B chain of insulin.. Shows particularly broad specificity; although bonds involving phenylalanine and leucine are preferred, many others are also cleaved to some extent. The polypeptide is Pepsin F (Oryctolagus cuniculus (Rabbit)).